The primary structure comprises 508 residues: Maturase K (508 aa).

The protein belongs to the intron maturase 2 family. MatK subfamily.

The protein resides in the plastid. It is found in the chloroplast. Its function is as follows. Usually encoded in the trnK tRNA gene intron. Probably assists in splicing its own and other chloroplast group II introns. The polypeptide is Maturase K (Marathrum schiedeanum).